Reading from the N-terminus, the 206-residue chain is Flavin prenyltransferase UbiX (206 aa).

FMN is bound by residues G14–S16, T40, S101–T104, and R136. Dimethylallyl phosphate-binding residues include Y166 and K182.

It belongs to the UbiX/PAD1 family.

The catalysed reaction is dimethylallyl phosphate + FMNH2 = prenylated FMNH2 + phosphate. In terms of biological role, flavin prenyltransferase that catalyzes the synthesis of the prenylated FMN cofactor (prenyl-FMN) for 4-hydroxy-3-polyprenylbenzoic acid decarboxylase UbiD. The prenyltransferase is metal-independent and links a dimethylallyl moiety from dimethylallyl monophosphate (DMAP) to the flavin N5 and C6 atoms of FMN. The sequence is that of Flavin prenyltransferase UbiX from Halalkalibacterium halodurans (strain ATCC BAA-125 / DSM 18197 / FERM 7344 / JCM 9153 / C-125) (Bacillus halodurans).